Here is a 424-residue protein sequence, read N- to C-terminus: UDP-N-acetylglucosamine 1-carboxyvinyltransferase (424 aa).

Lys22 to Asn23 contributes to the phosphoenolpyruvate binding site. Residue Arg98 coordinates UDP-N-acetyl-alpha-D-glucosamine. The active-site Proton donor is the Cys122. At Cys122 the chain carries 2-(S-cysteinyl)pyruvic acid O-phosphothioketal. Residues Arg127–Gln131, Asp312, and Ile334 contribute to the UDP-N-acetyl-alpha-D-glucosamine site.

Belongs to the EPSP synthase family. MurA subfamily.

It localises to the cytoplasm. The enzyme catalyses phosphoenolpyruvate + UDP-N-acetyl-alpha-D-glucosamine = UDP-N-acetyl-3-O-(1-carboxyvinyl)-alpha-D-glucosamine + phosphate. It participates in cell wall biogenesis; peptidoglycan biosynthesis. In terms of biological role, cell wall formation. Adds enolpyruvyl to UDP-N-acetylglucosamine. The polypeptide is UDP-N-acetylglucosamine 1-carboxyvinyltransferase (Xanthomonas campestris pv. campestris (strain 8004)).